The following is a 628-amino-acid chain: NUAK family SNF1-like kinase 2 (628 aa).

The residue at position 1 (Met-1) is an N-acetylmethionine. The Protein kinase domain occupies 53 to 303; sequence YEFLETLGKG…LEDVASHWWV (251 aa). Residues 59–67 and Lys-81 contribute to the ATP site; that span reads LGKGTYGKV. Catalysis depends on Asp-175, which acts as the Proton acceptor. Position 208 is a phosphothreonine (Thr-208). Disordered stretches follow at residues 355–492 and 522–570; these read KQHA…PQAS and GSLD…PLRG. The segment covering 428-444 has biased composition (pro residues); it reads ELSPIPVSPGQAAPPLP. Ser-435 carries the phosphoserine modification. Positions 457–469 are enriched in low complexity; sequence SGYYSSPEPSESG. 4 positions are modified to phosphoserine: Ser-523, Ser-544, Ser-547, and Ser-573.

It belongs to the protein kinase superfamily. CAMK Ser/Thr protein kinase family. SNF1 subfamily. Requires Mg(2+) as cofactor. Post-translationally, phosphorylated at Thr-208 by STK11/LKB1 in complex with STE20-related adapter-alpha (STRADA) pseudo kinase and CAB39. Autophosphorylation is also possible at Thr-208.

The enzyme catalyses L-seryl-[protein] + ATP = O-phospho-L-seryl-[protein] + ADP + H(+). It catalyses the reaction L-threonyl-[protein] + ATP = O-phospho-L-threonyl-[protein] + ADP + H(+). With respect to regulation, activated by phosphorylation on Thr-208. In terms of biological role, stress-activated kinase involved in tolerance to glucose starvation. Induces cell-cell detachment by increasing F-actin conversion to G-actin. Expression is induced by CD95 or TNF-alpha, via NF-kappa-B. Protects cells from CD95-mediated apoptosis and is required for the increased motility and invasiveness of CD95-activated tumor cells. Phosphorylates LATS1 and LATS2. Plays a key role in neural tube closure during embryonic development through LATS2 phosphorylation and regulation of the nuclear localization of YAP1 a critical downstream regulatory target in the Hippo signaling pathway. The sequence is that of NUAK family SNF1-like kinase 2 from Pongo abelii (Sumatran orangutan).